The following is a 91-amino-acid chain: Probable Fe(2+)-trafficking protein (91 aa).

It belongs to the Fe(2+)-trafficking protein family. Monomer.

Could be a mediator in iron transactions between iron acquisition and iron-requiring processes, such as synthesis and/or repair of Fe-S clusters in biosynthetic enzymes. The sequence is that of Probable Fe(2+)-trafficking protein from Escherichia coli O6:H1 (strain CFT073 / ATCC 700928 / UPEC).